We begin with the raw amino-acid sequence, 123 residues long: Large ribosomal subunit protein bL12 (123 aa).

Belongs to the bacterial ribosomal protein bL12 family. In terms of assembly, homodimer. Part of the ribosomal stalk of the 50S ribosomal subunit. Forms a multimeric L10(L12)X complex, where L10 forms an elongated spine to which 2 to 4 L12 dimers bind in a sequential fashion. Binds GTP-bound translation factors.

Functionally, forms part of the ribosomal stalk which helps the ribosome interact with GTP-bound translation factors. Is thus essential for accurate translation. This is Large ribosomal subunit protein bL12 from Photorhabdus laumondii subsp. laumondii (strain DSM 15139 / CIP 105565 / TT01) (Photorhabdus luminescens subsp. laumondii).